Here is a 388-residue protein sequence, read N- to C-terminus: MNKQIFVLYFNIFLIFLGIGLVIPVLPVYLKDLGLTGSDLGLLVAAFALSQMIISPFGGTLADKLGKKLIICIGLILFSVSEFMFAVGHNFSVLMLSRVIGGMSAGMVMPGVTGLIADVSPSHQKAKNFGYMSAIINSGFILGPGIGGFMAEVSHRMPFYFAGALGILAFIMSVVLIHDPKKSTTSGFQKLEPQLLTKINWKVFITPAILTLVLAFGLSAFETLYSLYTSYKVNYSPKDISIAITGGGIFGALFQIYFFDKFMKYFSELTFIAWSLIYSVIVLVLLVIADGYWTIMVISFAVFIGFDMIRPAITNYFSNIAGDRQGFAGGLNSTFTSMGNFIGPLIAGALFDVHIEAPIYMAIGVSLAGVVIVLIEKQHRAKLKQQDL.

The next 12 helical transmembrane spans lie at 5–25, 42–62, 69–89, 99–119, 129–149, 157–177, 201–221, 239–259, 269–289, 293–313, 331–351, and 355–375; these read IFVL…VIPV, LLVA…GTLA, LIIC…AVGH, VIGG…IADV, FGYM…IGGF, MPFY…VVLI, WKVF…LSAF, DISI…IYFF, LTFI…LVIA, WTIM…RPAI, LNST…GALF, and IEAP…IVLI.

This sequence belongs to the major facilitator superfamily. TCR/Tet family.

Its subcellular location is the cell membrane. In terms of biological role, involved in quinolone resistance. May constitute a membrane-associated active efflux pump of hydrophilic quinolones. The sequence is that of Quinolone resistance protein NorA (norA) from Staphylococcus aureus (strain MRSA252).